A 273-amino-acid chain; its full sequence is Epithelial sodium channel subunit beta (273 aa).

Residues 1-245 (NCYIFNWGQE…RSISESPTTN (245 aa)) lie on the Extracellular side of the membrane. 5 cysteine pairs are disulfide-bonded: Cys-92/Cys-179, Cys-117/Cys-175, Cys-121/Cys-171, Cys-130/Cys-157, and Cys-132/Cys-146. A helical membrane pass occupies residues 246–273 (VVWLLSNLGGQFGFWMGGSVLCIIEFGE).

This sequence belongs to the amiloride-sensitive sodium channel (TC 1.A.6) family. SCNN1B subfamily. Component of the heterotrimeric epithelial sodium channel (ENaC) composed of an alpha/SCNN1A, a beta/SCNN1B and a gamma/SCNN1G subunit.

Its subcellular location is the apical cell membrane. The protein resides in the cytoplasmic vesicle membrane. The catalysed reaction is Na(+)(in) = Na(+)(out). Its activity is regulated as follows. Originally identified and characterized by its inhibition by the diuretic drug amiloride. In terms of biological role, this is one of the three pore-forming subunits of the heterotrimeric epithelial sodium channel (ENaC), a critical regulator of sodium balance and fluid homeostasis. ENaC operates in epithelial tissues, where it mediates the electrodiffusion of sodium ions from extracellular fluid through the apical membrane of cells, with water following osmotically. It plays a key role in maintaining sodium homeostasis through electrogenic sodium reabsorption in the kidneys. Additionally, ENaC is essential for airway surface liquid homeostasis, which is crucial for proper mucus clearance. The chain is Epithelial sodium channel subunit beta from Aquarana catesbeiana (American bullfrog).